A 123-amino-acid polypeptide reads, in one-letter code: Large ribosomal subunit protein bL12 (123 aa).

This sequence belongs to the bacterial ribosomal protein bL12 family. Homodimer. Part of the ribosomal stalk of the 50S ribosomal subunit. Forms a multimeric L10(L12)X complex, where L10 forms an elongated spine to which 2 to 4 L12 dimers bind in a sequential fashion. Binds GTP-bound translation factors.

In terms of biological role, forms part of the ribosomal stalk which helps the ribosome interact with GTP-bound translation factors. Is thus essential for accurate translation. The chain is Large ribosomal subunit protein bL12 from Dehalococcoides mccartyi (strain ATCC BAA-2100 / JCM 16839 / KCTC 5957 / BAV1).